We begin with the raw amino-acid sequence, 279 residues long: S-methyl-5'-thioadenosine phosphorylase (279 aa).

Residues Ser13, 55–56 (RH), and 88–89 (TA) each bind phosphate. Met191 provides a ligand contact to substrate. Thr192 contacts phosphate. 215 to 217 (DYD) provides a ligand contact to substrate.

The protein belongs to the PNP/MTAP phosphorylase family. MTAP subfamily. Homotrimer.

The protein resides in the cytoplasm. Its subcellular location is the nucleus. It carries out the reaction S-methyl-5'-thioadenosine + phosphate = 5-(methylsulfanyl)-alpha-D-ribose 1-phosphate + adenine. The protein operates within amino-acid biosynthesis; L-methionine biosynthesis via salvage pathway; S-methyl-5-thio-alpha-D-ribose 1-phosphate from S-methyl-5'-thioadenosine (phosphorylase route): step 1/1. In terms of biological role, catalyzes the reversible phosphorylation of S-methyl-5'-thioadenosine (MTA) to adenine and 5-methylthioribose-1-phosphate. Involved in the breakdown of MTA, a major by-product of polyamine biosynthesis. Responsible for the first step in the methionine salvage pathway after MTA has been generated from S-adenosylmethionine. Has broad substrate specificity with 6-aminopurine nucleosides as preferred substrates. This Anopheles darlingi (Mosquito) protein is S-methyl-5'-thioadenosine phosphorylase.